The primary structure comprises 427 residues: 3-phosphoshikimate 1-carboxyvinyltransferase (427 aa).

The 3-phosphoshikimate site is built by Lys-20, Ser-21, and Arg-25. Residue Lys-20 participates in phosphoenolpyruvate binding. The phosphoenolpyruvate site is built by Gly-92 and Arg-120. Residues Ser-166, Gln-168, Asp-312, and Lys-339 each contribute to the 3-phosphoshikimate site. Gln-168 is a binding site for phosphoenolpyruvate. Asp-312 acts as the Proton acceptor in catalysis. Phosphoenolpyruvate-binding residues include Arg-343 and Arg-385.

It belongs to the EPSP synthase family. As to quaternary structure, monomer.

The protein localises to the cytoplasm. The enzyme catalyses 3-phosphoshikimate + phosphoenolpyruvate = 5-O-(1-carboxyvinyl)-3-phosphoshikimate + phosphate. It functions in the pathway metabolic intermediate biosynthesis; chorismate biosynthesis; chorismate from D-erythrose 4-phosphate and phosphoenolpyruvate: step 6/7. Catalyzes the transfer of the enolpyruvyl moiety of phosphoenolpyruvate (PEP) to the 5-hydroxyl of shikimate-3-phosphate (S3P) to produce enolpyruvyl shikimate-3-phosphate and inorganic phosphate. The chain is 3-phosphoshikimate 1-carboxyvinyltransferase from Streptococcus mutans serotype c (strain ATCC 700610 / UA159).